The primary structure comprises 208 residues: Imidazoleglycerol-phosphate dehydratase (208 aa).

The protein belongs to the imidazoleglycerol-phosphate dehydratase family.

It is found in the cytoplasm. It carries out the reaction D-erythro-1-(imidazol-4-yl)glycerol 3-phosphate = 3-(imidazol-4-yl)-2-oxopropyl phosphate + H2O. It functions in the pathway amino-acid biosynthesis; L-histidine biosynthesis; L-histidine from 5-phospho-alpha-D-ribose 1-diphosphate: step 6/9. The chain is Imidazoleglycerol-phosphate dehydratase from Psychrobacter sp. (strain PRwf-1).